We begin with the raw amino-acid sequence, 589 residues long: MSGLRKTSIALMRRSTSSTTILPHSGGVGGAVSPPSSGVGVATEIEKSIAMQRLRTGESSNPKKLNVSQQPVTSVATTRTTASSLPAETTSSPAAAVRPYSEVPGPYPLPLIGNSWRFAPLIGTYKISDLDKVMNELHVNYGKMAKVGGLIGHPDLLFVFDGDEIRNIFKKEEAMPHRPSMPSLRHYKGDLRRDFFGDVAGLIGVHGPKWEAFRQEVQHILLQPQTAKKYIPPLNDIASEFMGRIELMRDEKDELPANFLHELYKWALESVGRVSLDTRLGCLSPEGSEEAQQIIEAINTFFWAVPELELRMPLWRIYPTKAYRSFVKALDQFTAICMKNIGKTMDKADADEARGLSKSEADISIVERIVRKTGNRKLAAILALDLFLVGVDTTSVAASSTIYQLAKNPDKQKKLFDELQKVFPHREADINQNVLEQMPYLRACVKETLRMRPVVIANGRSLQSDAVINGYHVPKGTHVIFPHLVVSNDPAYFPEPKRFLPERWLKQSTDAAGCPHANQKIHPFVSLPFGFGRRMCVGRRFAEIELHTLLAKIFRKYKVSYNSGEFVYRVNSTYIPQSPLNFKLTLRDE.

The segment at threonine 56–threonine 90 is disordered. The span at glycine 57–proline 71 shows a compositional bias: polar residues. Over residues valine 72 to serine 84 the composition is skewed to low complexity. Residue cysteine 536 participates in heme binding.

Belongs to the cytochrome P450 family. It depends on heme as a cofactor.

The protein localises to the endoplasmic reticulum membrane. The protein resides in the microsome membrane. Its function is as follows. May be involved in the metabolism of insect hormones and in the breakdown of synthetic insecticides. This chain is Probable cytochrome P450 49a1 (Cyp49a1), found in Drosophila melanogaster (Fruit fly).